We begin with the raw amino-acid sequence, 320 residues long: Cytochrome f (320 aa).

The N-terminal stretch at 1–35 is a signal peptide; sequence MQNRNTFSWIKEQMTRSISVSIMIYVITRTAISNA. Positions 36, 56, 59, and 60 each coordinate heme. Residues 286 to 306 traverse the membrane as a helical segment; that stretch reads VQGLLFFLASVILAQIFLVLK.

This sequence belongs to the cytochrome f family. The 4 large subunits of the cytochrome b6-f complex are cytochrome b6, subunit IV (17 kDa polypeptide, petD), cytochrome f and the Rieske protein, while the 4 small subunits are PetG, PetL, PetM and PetN. The complex functions as a dimer. Heme is required as a cofactor.

It is found in the plastid. Its subcellular location is the chloroplast thylakoid membrane. In terms of biological role, component of the cytochrome b6-f complex, which mediates electron transfer between photosystem II (PSII) and photosystem I (PSI), cyclic electron flow around PSI, and state transitions. This chain is Cytochrome f, found in Platanus occidentalis (Sycamore).